A 228-amino-acid chain; its full sequence is 7-cyano-7-deazaguanine synthase (228 aa).

8–18 (LSGGLDSTTCL) is a binding site for ATP. 4 residues coordinate Zn(2+): cysteine 188, cysteine 198, cysteine 201, and cysteine 204.

Belongs to the QueC family. Requires Zn(2+) as cofactor.

The enzyme catalyses 7-carboxy-7-deazaguanine + NH4(+) + ATP = 7-cyano-7-deazaguanine + ADP + phosphate + H2O + H(+). Its pathway is purine metabolism; 7-cyano-7-deazaguanine biosynthesis. Catalyzes the ATP-dependent conversion of 7-carboxy-7-deazaguanine (CDG) to 7-cyano-7-deazaguanine (preQ(0)). The chain is 7-cyano-7-deazaguanine synthase from Legionella pneumophila (strain Corby).